We begin with the raw amino-acid sequence, 441 residues long: Tol-Pal system protein TolB (441 aa).

A signal peptide spans 1–39; it reads MPAMTPAFRRADLTGFLRTYGAALILLLAAMLAWQPAQA.

This sequence belongs to the TolB family. The Tol-Pal system is composed of five core proteins: the inner membrane proteins TolA, TolQ and TolR, the periplasmic protein TolB and the outer membrane protein Pal. They form a network linking the inner and outer membranes and the peptidoglycan layer.

The protein resides in the periplasm. Part of the Tol-Pal system, which plays a role in outer membrane invagination during cell division and is important for maintaining outer membrane integrity. The protein is Tol-Pal system protein TolB of Bordetella bronchiseptica (strain ATCC BAA-588 / NCTC 13252 / RB50) (Alcaligenes bronchisepticus).